A 257-amino-acid chain; its full sequence is UPF0246 protein CPS_4102 (257 aa).

Belongs to the UPF0246 family.

The sequence is that of UPF0246 protein CPS_4102 from Colwellia psychrerythraea (strain 34H / ATCC BAA-681) (Vibrio psychroerythus).